Here is a 198-residue protein sequence, read N- to C-terminus: FMN-dependent NADH:quinone oxidoreductase (198 aa).

FMN contacts are provided by residues S10 and 16-18; that span reads SIS.

It belongs to the azoreductase type 1 family. In terms of assembly, homodimer. It depends on FMN as a cofactor.

The enzyme catalyses 2 a quinone + NADH + H(+) = 2 a 1,4-benzosemiquinone + NAD(+). It carries out the reaction N,N-dimethyl-1,4-phenylenediamine + anthranilate + 2 NAD(+) = 2-(4-dimethylaminophenyl)diazenylbenzoate + 2 NADH + 2 H(+). Its function is as follows. Quinone reductase that provides resistance to thiol-specific stress caused by electrophilic quinones. In terms of biological role, also exhibits azoreductase activity. Catalyzes the reductive cleavage of the azo bond in aromatic azo compounds to the corresponding amines. This Mycoplasmopsis pulmonis (strain UAB CTIP) (Mycoplasma pulmonis) protein is FMN-dependent NADH:quinone oxidoreductase.